The sequence spans 536 residues: Pentatricopeptide repeat-containing protein At2g06000 (536 aa).

12 PPR repeats span residues 102 to 136 (SFWT…GVSP), 137 to 167 (NNRL…SFEV), 170 to 200 (CCMV…HLRF), 205 to 239 (DTKT…GCEP), 240 to 274 (DIVT…SVCS), 276 to 310 (DVVT…GIYP), 311 to 345 (TNVT…GCFP), 346 to 380 (DVVT…GMFP), 381 to 415 (NAFT…DIIP), 416 to 450 (QPFM…KCKP), 451 to 485 (DKIT…GCSP), and 486 to 523 (DKIT…NVVP).

It belongs to the PPR family. P subfamily.

The chain is Pentatricopeptide repeat-containing protein At2g06000 from Arabidopsis thaliana (Mouse-ear cress).